The sequence spans 323 residues: MKTTFLDFEQPIAELEAKIEELRFVQDDSVVDISEEIERLSKKSQQLTKDLYAHLTPWQVSQIARHPQRPYTLDYVSELFTDFHELHGDRAFADDLSIVGGLARFNGHACMVIGHQKGRDTKERAARNFGMPRPEGYRKAERLMRVAEKFGLPIFTFIDTPGAYPGVGAEERGQSEAIGHNLYVMAELKTPIIATVIGEGGSGGALAIAVADTVMMLQFSTYSVISPEGCASILWKSAAKAPEAAEALGLTAHRLKALGLIDKIVNEPLGGAHRDPKGTAALLRRALGDSLRQFQGMSVDALRERRFERLMAYGKYKETTARA.

Residues 39 to 293 (RLSKKSQQLT…RRALGDSLRQ (255 aa)) form the CoA carboxyltransferase C-terminal domain.

It belongs to the AccA family. Acetyl-CoA carboxylase is a heterohexamer composed of biotin carboxyl carrier protein (AccB), biotin carboxylase (AccC) and two subunits each of ACCase subunit alpha (AccA) and ACCase subunit beta (AccD).

The protein localises to the cytoplasm. It catalyses the reaction N(6)-carboxybiotinyl-L-lysyl-[protein] + acetyl-CoA = N(6)-biotinyl-L-lysyl-[protein] + malonyl-CoA. It participates in lipid metabolism; malonyl-CoA biosynthesis; malonyl-CoA from acetyl-CoA: step 1/1. Its function is as follows. Component of the acetyl coenzyme A carboxylase (ACC) complex. First, biotin carboxylase catalyzes the carboxylation of biotin on its carrier protein (BCCP) and then the CO(2) group is transferred by the carboxyltransferase to acetyl-CoA to form malonyl-CoA. Does not confer resistance to the endogenous polyketide antibiotic thailandamide, does not confer resistance to thailandamide when expressed in S.typhimurium. The sequence is that of Acetyl-coenzyme A carboxylase carboxyl transferase subunit alpha 1 from Burkholderia thailandensis (strain ATCC 700388 / DSM 13276 / CCUG 48851 / CIP 106301 / E264).